The sequence spans 501 residues: ATP synthase subunit alpha (501 aa).

Residue 169-176 coordinates ATP; sequence GDRQTGKT.

Belongs to the ATPase alpha/beta chains family. As to quaternary structure, F-type ATPases have 2 components, CF(1) - the catalytic core - and CF(0) - the membrane proton channel. CF(1) has five subunits: alpha(3), beta(3), gamma(1), delta(1), epsilon(1). CF(0) has three main subunits: a(1), b(2) and c(9-12). The alpha and beta chains form an alternating ring which encloses part of the gamma chain. CF(1) is attached to CF(0) by a central stalk formed by the gamma and epsilon chains, while a peripheral stalk is formed by the delta and b chains.

It is found in the cell membrane. The catalysed reaction is ATP + H2O + 4 H(+)(in) = ADP + phosphate + 5 H(+)(out). In terms of biological role, produces ATP from ADP in the presence of a proton gradient across the membrane. The alpha chain is a regulatory subunit. This Streptococcus uberis (strain ATCC BAA-854 / 0140J) protein is ATP synthase subunit alpha.